Reading from the N-terminus, the 152-residue chain is UPF0225 protein YchJ (152 aa).

Belongs to the UPF0225 family.

This Shigella flexneri serotype 5b (strain 8401) protein is UPF0225 protein YchJ.